The chain runs to 60 residues: Large ribosomal subunit protein bL32 (60 aa).

Residues 1–23 (MAKHPVPKKKTSKSKRDMRRSHH) show a composition bias toward basic residues. Residues 1–34 (MAKHPVPKKKTSKSKRDMRRSHHALTAPNLTECP) form a disordered region. 4 residues coordinate Zn(2+): Cys33, Cys36, Cys46, and Cys49. Residues 33-49 (CPQCHGKKLSHHICPNC) form a C4-type zinc finger.

It belongs to the bacterial ribosomal protein bL32 family. Part of the 50S ribosomal subunit. Contacts proteins L17 and L22. Zn(2+) is required as a cofactor.

In terms of biological role, forms a cluster with L17 and L22, and with L22, a pair of 'tweezers' that hold together all the domains of the 23S rRNA. Interacts with the antibiotic troleandomycin which blocks the peptide exit tunnel. The polypeptide is Large ribosomal subunit protein bL32 (rpmF) (Deinococcus radiodurans (strain ATCC 13939 / DSM 20539 / JCM 16871 / CCUG 27074 / LMG 4051 / NBRC 15346 / NCIMB 9279 / VKM B-1422 / R1)).